Here is a 217-residue protein sequence, read N- to C-terminus: MILILLGPPGIGKGTQAAVLSDLLKLQHVATGDIFRKNFQENTPLGKESKKFINKGLLVPDEITNQMIADYLSQIVPHSNFLLDGFPRNVFQAQFLETFFTKSNLHLNKVIYFNAFKQDLMKRIEGRRICSHCGKVYHLDNLPPKIEGICDKDQKKLIQREDDKPNTFLKRLKVFNQETLHLVEYYRSKKQLFEVDGMQNIQQVTQKILKVLETEQK.

10 to 15 contributes to the ATP binding site; it reads GIGKGT. The segment at 30 to 59 is NMP; the sequence is ATGDIFRKNFQENTPLGKESKKFINKGLLV. AMP contacts are provided by residues T31, R36, 57–59, 85–88, and Q92; these read LLV and GFPR. An LID region spans residues 126–163; it reads GRRICSHCGKVYHLDNLPPKIEGICDKDQKKLIQREDD. R127 contacts ATP. 2 residues coordinate Zn(2+): C130 and C133. Residue 136 to 137 participates in ATP binding; the sequence is VY. C150 and D153 together coordinate Zn(2+). R160 and R171 together coordinate AMP. ATP is bound at residue Q199.

This sequence belongs to the adenylate kinase family. In terms of assembly, monomer.

Its subcellular location is the cytoplasm. The catalysed reaction is AMP + ATP = 2 ADP. It participates in purine metabolism; AMP biosynthesis via salvage pathway; AMP from ADP: step 1/1. Functionally, catalyzes the reversible transfer of the terminal phosphate group between ATP and AMP. Plays an important role in cellular energy homeostasis and in adenine nucleotide metabolism. In Phytoplasma australiense, this protein is Adenylate kinase.